A 629-amino-acid chain; its full sequence is Hemocyanin F chain (629 aa).

Residues His-172, His-176, His-203, His-324, His-328, and His-364 each contribute to the Cu cation site. Asn-395 and Asn-447 each carry an N-linked (GlcNAc...) asparagine glycan. Positions 503 to 513 are enriched in polar residues; it reads SESSVTVSHTP. Positions 503–522 are disordered; that stretch reads SESSVTVSHTPTFEELQRGE. A glycan (N-linked (GlcNAc...) asparagine) is linked at Asn-527. Cys-534 and Cys-582 are oxidised to a cystine. Asn-615 carries N-linked (GlcNAc...) asparagine glycosylation.

It belongs to the tyrosinase family. Hemocyanin subfamily. As to quaternary structure, tarantula hemocyanin is a 24-chain polymer with seven different chains identified. Hemolymph.

Its subcellular location is the secreted. The protein resides in the extracellular space. In terms of biological role, hemocyanins are copper-containing oxygen carriers occurring freely dissolved in the hemolymph of many mollusks and arthropods. In Aphonopelma sp. (American tarantula), this protein is Hemocyanin F chain (HCF).